The sequence spans 366 residues: MKFDSAKIENVVGGGSFEIGDDDSKILDEIISEVINDIMPSEIKLKKKIEMIDNTIEYLSYELLVTFIKHGVEFGIFPIIAKYSPKIDDIPLLVKYPNKQFILDYIKTALKLEILKYEDEKIKINEDFELNIKMPKFDKIISDYVMKYNFITHVSRYALISYSHPKIAISFKKDPDIWDMILSSPYYSLCREIASDYLKIDKGDYILDVGCGSRSPKYFIDMIYPEGHYMGVDISKGLLQIAECRIKRLYCDSYELKNIDFTKIIPKEKYDYIICSHTMIYAPSLKQFLNKMMSSIHSGGKIFISEEFILDKNENICKEVFEFYNRLNKRFRGYYSEKDIVDILESLGYDFKIESLGNGILVIEKI.

This is an uncharacterized protein from Methanocaldococcus jannaschii (strain ATCC 43067 / DSM 2661 / JAL-1 / JCM 10045 / NBRC 100440) (Methanococcus jannaschii).